Reading from the N-terminus, the 356-residue chain is Probable neutral protease 2 homolog TRV_06370 (356 aa).

Positions 1–17 (MQFTALLAALGAPLALA) are cleaved as a signal peptide. A propeptide spanning residues 18–183 (ASIPAAAHNH…DDSTGVIDKR (166 aa)) is cleaved from the precursor. 2 disulfides stabilise this stretch: Cys-191–Cys-262 and Cys-269–Cys-287. A Zn(2+)-binding site is contributed by His-311. The active site involves Glu-312. Positions 315 and 326 each coordinate Zn(2+).

Belongs to the peptidase M35 family. Requires Zn(2+) as cofactor.

Its subcellular location is the secreted. It catalyses the reaction Preferential cleavage of bonds with hydrophobic residues in P1'. Also 3-Asn-|-Gln-4 and 8-Gly-|-Ser-9 bonds in insulin B chain.. Functionally, probable secreted metalloprotease that shows high activities on basic nuclear substrates such as histone and protamine. May be involved in virulence. The polypeptide is Probable neutral protease 2 homolog TRV_06370 (Trichophyton verrucosum (strain HKI 0517)).